The primary structure comprises 34 residues: Stromal 70 kDa heat shock-related protein, chloroplastic (34 aa).

The protein belongs to the heat shock protein 70 family.

The protein resides in the plastid. It localises to the chloroplast stroma. Interacts with newly imported chloroplast proteins to assist in their maturation. The protein is Stromal 70 kDa heat shock-related protein, chloroplastic of Cucurbita maxima (Pumpkin).